Consider the following 163-residue polypeptide: K88 minor fimbrial subunit FaeF (163 aa).

The N-terminal stretch at 1 to 22 (MKKTMMAAALVLSALSIQSALA) is a signal peptide.

It is found in the fimbrium. Its function is as follows. K88 minor fimbrial subunit, plays an essential role in the biogenesis of the K88 fimbriae. required at some step in the initiation and/or elongation of the K88 fimbriae. The sequence is that of K88 minor fimbrial subunit FaeF (faeF) from Escherichia coli.